The chain runs to 465 residues: Methylenetetrahydrofolate--tRNA-(uracil-5-)-methyltransferase TrmFO (465 aa).

10-15 provides a ligand contact to FAD; the sequence is GAGLAG.

The protein belongs to the MnmG family. TrmFO subfamily. FAD serves as cofactor.

It localises to the cytoplasm. It catalyses the reaction uridine(54) in tRNA + (6R)-5,10-methylene-5,6,7,8-tetrahydrofolate + NADH + H(+) = 5-methyluridine(54) in tRNA + (6S)-5,6,7,8-tetrahydrofolate + NAD(+). The enzyme catalyses uridine(54) in tRNA + (6R)-5,10-methylene-5,6,7,8-tetrahydrofolate + NADPH + H(+) = 5-methyluridine(54) in tRNA + (6S)-5,6,7,8-tetrahydrofolate + NADP(+). Catalyzes the folate-dependent formation of 5-methyl-uridine at position 54 (M-5-U54) in all tRNAs. The sequence is that of Methylenetetrahydrofolate--tRNA-(uracil-5-)-methyltransferase TrmFO from Deinococcus radiodurans (strain ATCC 13939 / DSM 20539 / JCM 16871 / CCUG 27074 / LMG 4051 / NBRC 15346 / NCIMB 9279 / VKM B-1422 / R1).